Consider the following 342-residue polypeptide: Non-homologous end-joining protein 1 (342 aa).

2 helical membrane passes run 27–47 (LLLFLPMSSPTTIVMIVLVSL) and 129–149 (MFYMILQSLCMLLLKLVNLST). The interval 173–342 (LRDLDGGSKV…RKFGKVRIKN (170 aa)) is interaction with LIF1. The tract at residues 270–342 (ADPTNEARPN…RKFGKVRIKN (73 aa)) is disordered. Residues 286 to 296 (PKTDFKPKSRE) show a composition bias toward basic and acidic residues. The segment covering 297–312 (SSTSSQLRLENFSESE) has biased composition (polar residues). Residues 331–342 (KKRKFGKVRIKN) are compositionally biased toward basic residues.

Belongs to the XRCC4-XLF family. XLF subfamily. Interacts (via C-terminus) with LIF1 (via N-terminus); the interaction is direct. Interacts with DNL4.

Its subcellular location is the cytoplasm. The protein localises to the nucleus membrane. Involved in non-homologous end joining (NHEJ). Facilitates the transport of LIF1 into the nucleus, where it can interact with DNA ligase DNL4 to repair double-strand breaks (DSB). Mediates mating-type regulation of NHEJ. Prevents chromosome circularisation by NHEJ in absence of telomerase. The sequence is that of Non-homologous end-joining protein 1 (NEJ1) from Saccharomyces cerevisiae (strain ATCC 204508 / S288c) (Baker's yeast).